Reading from the N-terminus, the 360-residue chain is DNA primase large subunit PriL (360 aa).

[4Fe-4S] cluster is bound by residues Cys237, Cys309, Cys318, and Cys325. A disordered region spans residues 340-360 (DDGDDDDLADWRDREDDDSPD).

It belongs to the eukaryotic-type primase large subunit family. Heterodimer of a small subunit (PriS) and a large subunit (PriL). [4Fe-4S] cluster is required as a cofactor.

Functionally, regulatory subunit of DNA primase, an RNA polymerase that catalyzes the synthesis of short RNA molecules used as primers for DNA polymerase during DNA replication. Stabilizes and modulates the activity of the small subunit, increasing the rate of DNA synthesis, and conferring RNA synthesis capability. The DNA polymerase activity may enable DNA primase to also catalyze primer extension after primer synthesis. May also play a role in DNA repair. In Halobacterium salinarum (strain ATCC 29341 / DSM 671 / R1), this protein is DNA primase large subunit PriL.